A 432-amino-acid chain; its full sequence is Tol-Pal system protein TolB (432 aa).

The N-terminal stretch at 1–24 (MKLVTRMWSILIVFFLAVLQPAQA) is a signal peptide.

This sequence belongs to the TolB family. The Tol-Pal system is composed of five core proteins: the inner membrane proteins TolA, TolQ and TolR, the periplasmic protein TolB and the outer membrane protein Pal. They form a network linking the inner and outer membranes and the peptidoglycan layer.

The protein resides in the periplasm. Its function is as follows. Part of the Tol-Pal system, which plays a role in outer membrane invagination during cell division and is important for maintaining outer membrane integrity. The chain is Tol-Pal system protein TolB from Pasteurella multocida (strain Pm70).